A 423-amino-acid polypeptide reads, in one-letter code: Sphingomyelin phosphodiesterase 2 (423 aa).

Glutamate 49 is a binding site for Mg(2+). Histidine 272 (proton acceptor) is an active-site residue. Transmembrane regions (helical) follow at residues 330–350 (VIGL…GGGA) and 354–374 (AILL…FYLF). Residues 400 to 423 (QDLGPEPQPALLLGQQEGDRTKEQ) are disordered.

Belongs to the neutral sphingomyelinase family. The cofactor is Mg(2+).

It localises to the cell membrane. The enzyme catalyses a sphingomyelin + H2O = phosphocholine + an N-acylsphing-4-enine + H(+). It catalyses the reaction an N-(acyl)-sphingosylphosphocholine + H2O = an N-acyl-sphingoid base + phosphocholine + H(+). The catalysed reaction is 1-O-octadecyl-sn-glycero-3-phosphocholine + H2O = 1-O-octadecyl-sn-glycerol + phosphocholine + H(+). It carries out the reaction 1-O-hexadecyl-sn-glycero-3-phosphocholine + H2O = 1-O-hexadecyl-sn-glycerol + phosphocholine + H(+). The enzyme catalyses 1-hexadecanoyl-sn-glycero-3-phosphocholine + H2O = 1-hexadecanoyl-sn-glycerol + phosphocholine + H(+). It catalyses the reaction a sphingosylphosphocholine + H2O = a sphingoid base + phosphocholine + H(+). It functions in the pathway lipid metabolism; sphingolipid metabolism. Its function is as follows. Catalyzes, at least in vitro, the hydrolysis of sphingomyelin to form ceramide and phosphocholine. Also hydrolyzes 1-O-alkyl-2-lyso-sn-glycero-3-phosphocholine (lyso-platelet-activating factor) in vivo. Also acts on 1-acyl-2-lyso-sn-glycero-3-phosphocholine (lyso-PC) and sphingosylphosphocholine. The protein is Sphingomyelin phosphodiesterase 2 of Homo sapiens (Human).